The sequence spans 422 residues: Protein TEX1 (422 aa).

5 WD repeats span residues 61-100 (ITPN…FDKS), 158-197 (GSKT…SSVC), 207-246 (EDND…LEVC), 251-290 (AHTG…CELI), and 293-332 (DLNS…LLHS). Residues 388-422 (KRRKNNGGGNNHNKRTSKNTDRIGKDRPSRFNSKK) form a disordered region. The segment covering 405-416 (KNTDRIGKDRPS) has biased composition (basic and acidic residues).

This sequence belongs to the THOC3 family. In terms of assembly, component of the transcription/export (TREX) complex and the THO complex.

It is found in the nucleus. Component of the TREX complex, which operates in coupling transcription elongation to mRNA export. The chain is Protein TEX1 (TEX1) from Saccharomyces cerevisiae (strain ATCC 204508 / S288c) (Baker's yeast).